The primary structure comprises 527 residues: Serine/threonine-protein kinase NLK (527 aa).

Sufficient for interaction with DAPK3 regions lie at residues 1–125 (MSLC…KAHH) and 124–416 (HHHQ…SKRI). Required for interaction with TAB2 stretches follow at residues 1 to 304 (MSLC…VVTQ) and 434 to 527 (YHTC…LVWE). Disordered regions lie at residues 22–72 (AAAA…SSAA) and 90–140 (QQPY…DIEP). Residues 26–54 (GHHHHHHHHLPHLPPPHLHHHHHPQHHLH) are compositionally biased toward basic residues. Residues 103 to 119 (PGPAAAAPAQVQAAAAA) show a composition bias toward low complexity. Residues 122-131 (KAHHHQHSHH) show a composition bias toward basic residues. Residues 138-427 (IEPDRPIGYG…AKDALAHPYL (290 aa)) enclose the Protein kinase domain. ATP-binding positions include 144–152 (IGYGAFGVV) and K167. Catalysis depends on D264, which acts as the Proton acceptor. A Phosphothreonine; by autocatalysis modification is found at T298. The TQE signature appears at 298-300 (TQE). Residues 428-527 (DEGRLRYHTC…EMPPSPLVWE (100 aa)) form a required for homodimerization and kinase activation and localization to the nucleus region. The residue at position 522 (S522) is a Phosphoserine.

This sequence belongs to the protein kinase superfamily. CMGC Ser/Thr protein kinase family. MAP kinase subfamily. Homodimer. Homodimerization is required for intermolecular autophosphorylation, kinase activation and nuclear localization. May interact with components of cullin-RING-based SCF (SKP1-CUL1-F-box protein) E3 ubiquitin-protein ligase complexes. Interacts with LEF1, MEF2A, MYBL1 and MYBL2. Interacts with the upstream activating kinases HIPK2 and MAP3K7/TAK1. Interaction with MAP3K7/TAK1 seems to be indirect, and may be mediated by other proteins such as STAT3, TAB1 and TAB2. Interacts with and phosphorylates a number of transcription factors including FOXO1, FOXO3, FOXO4, MYB, NOTCH1 and TCF7L2/TCF4. Interacts with DAPK3/ZIPK, and this interaction may disrupt interaction with transcription factors such as TCF7L2/TCF4. Interacts with RNF138/NARF. Interacts with ATF5; the interaction stabilizes ATF5 at the protein level in a kinase-independent manner. It depends on Mg(2+) as a cofactor. Post-translationally, phosphorylated on Thr-298. Intermolecular autophosphorylation on Thr-298 activates the enzyme.

The protein localises to the nucleus. The protein resides in the cytoplasm. It carries out the reaction L-seryl-[protein] + ATP = O-phospho-L-seryl-[protein] + ADP + H(+). It catalyses the reaction L-threonyl-[protein] + ATP = O-phospho-L-threonyl-[protein] + ADP + H(+). With respect to regulation, activated by dimerization and subsequent intermolecular autophosphorylation on Thr-298. Activated by the non-canonical Wnt signaling pathway, in which WNT5A treatment leads to activation of MAP3K7/TAK1 and HIPK2, which subsequently phosphorylates and activates this protein. Other cytokines such as IL6 may also activate this regulatory circuit. Functionally, serine/threonine-protein kinase that regulates a number of transcription factors with key roles in cell fate determination. Positive effector of the non-canonical Wnt signaling pathway, acting downstream of WNT5A, MAP3K7/TAK1 and HIPK2. Negative regulator of the canonical Wnt/beta-catenin signaling pathway. Binds to and phosphorylates TCF7L2/TCF4 and LEF1, promoting the dissociation of the TCF7L2/LEF1/beta-catenin complex from DNA, as well as the ubiquitination and subsequent proteolysis of LEF1. Together these effects inhibit the transcriptional activation of canonical Wnt/beta-catenin target genes. Negative regulator of the Notch signaling pathway. Binds to and phosphorylates NOTCH1, thereby preventing the formation of a transcriptionally active ternary complex of NOTCH1, RBPJ/RBPSUH and MAML1. Negative regulator of the MYB family of transcription factors. Phosphorylation of MYB leads to its subsequent proteolysis while phosphorylation of MYBL1 and MYBL2 inhibits their interaction with the coactivator CREBBP. Other transcription factors may also be inhibited by direct phosphorylation of CREBBP itself. Acts downstream of IL6 and MAP3K7/TAK1 to phosphorylate STAT3, which is in turn required for activation of NLK by MAP3K7/TAK1. Upon IL1B stimulus, cooperates with ATF5 to activate the transactivation activity of C/EBP subfamily members. Phosphorylates ATF5 but also stabilizes ATF5 protein levels in a kinase-independent manner. Acts as an inhibitor of the mTORC1 complex in response to osmotic stress by mediating phosphorylation of RPTOR, thereby preventing recruitment of the mTORC1 complex to lysosomes. This Homo sapiens (Human) protein is Serine/threonine-protein kinase NLK (NLK).